A 783-amino-acid chain; its full sequence is Type 4 coupling protein DotL (783 aa).

Residues 47-67 (VSYYFSEAATFLLIMGGIFFL) traverse the membrane as a helical segment. The interval 100–500 (NIARGITFFG…ICMKLEDPTE (401 aa)) is ATPase domain. The interval 671 to 773 (VEGALTIFSK…SAKISAEREK (103 aa)) is interaction with IcmS/IcmW.

The T4BSS is a complex nanomachine composed of several subcomplexes. This subunit is part of the Type IV Coupling Complex (T4CC), a subcomplex composed of the DotLMNYZ core and the IcmSW-LvgA adapter subunits, linked by the C-terminal tail of DotL. Six DotLMNYZ hetero-pentameric units may assemble into a hexameric nanomachine, forming an inner membrane channel for effectors to pass through. Interacts directly with DotM. Interacts directly, via its C-terminal region, with the type IV adapter proteins IcmS and IcmW. Also interacts with DotN and LvgA via its C-terminal region.

It localises to the cell inner membrane. In terms of biological role, component of the Dot/Icm type IVB secretion system (T4BSS), which is used to inject bacterial effector proteins into eukaryotic host cells. Part of a subcomplex which recruits effector proteins and delivers them to the core transmembrane subcomplex. Plays a central role in the assembly of the subcomplex. Required for the recruitment of IcmS and IcmW to the inner membrane and for the translocation of adapter-dependent substrates. May have ATPase activity. This is Type 4 coupling protein DotL from Legionella pneumophila subsp. pneumophila (strain Philadelphia 1 / ATCC 33152 / DSM 7513).